Consider the following 404-residue polypeptide: Probable glucan endo-1,6-beta-glucosidase B (404 aa).

An N-terminal signal peptide occupies residues Met-1–Ala-20. 2 N-linked (GlcNAc...) asparagine glycosylation sites follow: Asn-33 and Asn-130. Glu-222 acts as the Proton donor in catalysis. Asn-253 and Asn-299 each carry an N-linked (GlcNAc...) asparagine glycan. Glu-324 (nucleophile) is an active-site residue.

It belongs to the glycosyl hydrolase 5 (cellulase A) family.

It localises to the secreted. The enzyme catalyses Random hydrolysis of (1-&gt;6)-linkages in (1-&gt;6)-beta-D-glucans.. Beta-glucanases participate in the metabolism of beta-glucan, the main structural component of the cell wall. Acts on lutean, pustulan and 1,6-oligo-beta-D-glucosides. In Aspergillus terreus (strain NIH 2624 / FGSC A1156), this protein is Probable glucan endo-1,6-beta-glucosidase B (exgB).